The chain runs to 225 residues: 7-cyano-7-deazaguanine synthase (225 aa).

Position 10-20 (10-20 (VSGGLDSTTVI)) interacts with ATP. Cys189, Cys199, Cys202, and Cys205 together coordinate Zn(2+).

The protein belongs to the QueC family. It depends on Zn(2+) as a cofactor.

The catalysed reaction is 7-carboxy-7-deazaguanine + NH4(+) + ATP = 7-cyano-7-deazaguanine + ADP + phosphate + H2O + H(+). The protein operates within purine metabolism; 7-cyano-7-deazaguanine biosynthesis. Functionally, catalyzes the ATP-dependent conversion of 7-carboxy-7-deazaguanine (CDG) to 7-cyano-7-deazaguanine (preQ(0)). This is 7-cyano-7-deazaguanine synthase from Cellvibrio japonicus (strain Ueda107) (Pseudomonas fluorescens subsp. cellulosa).